A 269-amino-acid chain; its full sequence is UPF0494 membrane protein C1348.01 (269 aa).

The next 4 helical transmembrane spans lie at 107–127, 144–164, 177–197, and 201–221; these read WPLLIIWSIIIVFAVDKKFEV, IWVPIAIYVCLLVLMLLSLIF, GVIIAVLGMIIAVLGMIIAAL, and ITGLLYFGHWALYKLVILSLG.

Belongs to the UPF0494 family.

Its subcellular location is the vacuole membrane. The chain is UPF0494 membrane protein C1348.01 from Schizosaccharomyces pombe (strain 972 / ATCC 24843) (Fission yeast).